We begin with the raw amino-acid sequence, 317 residues long: UV DNA damage endonuclease (317 aa).

This sequence belongs to the uve1/UvsE family.

Its function is as follows. Component in a DNA repair pathway. Removal of UV LIGHT damaged nucleotides. Recognizes pyrimidine dimers and cleave a phosphodiester bond immediately 5' to the lesion. The polypeptide is UV DNA damage endonuclease (Bacillus anthracis (strain A0248)).